A 146-amino-acid chain; its full sequence is MLRILTVVLALVTIATVHAELSKKKEDKTLKDLEDKIVNDVMTHKVMVYSKTYCPWSKRLKAILANYEIDDMKIVELDRSNQTEEMQEILKKYSGRTTVPQLFISGKFVGGHDETKAIEEKGELRPLLEKAHALFTNRVPVPDNGA.

The Glutaredoxin domain occupies 34–135; that stretch reads EDKIVNDVMT…PLLEKAHALF (102 aa). Cys-54 serves as a coordination point for [2Fe-2S] cluster.

Belongs to the glutaredoxin family. Monothiol subfamily.

This is an uncharacterized protein from Caenorhabditis elegans.